We begin with the raw amino-acid sequence, 303 residues long: Heme A synthase (303 aa).

Residues 1 to 8 (MFGKKNLK) are Cytoplasmic-facing. A helical membrane pass occupies residues 9–29 (WLGVVATLMMTFVQLGGALVT). Residues 30 to 67 (KTGSADGCGSSWPLCHGALIPEFFPIDTIIELSHRAVS) are Extracellular-facing. The cysteines at positions 37 and 44 are disulfide-linked. The active site involves E60. Residue H63 coordinates heme o. A helical membrane pass occupies residues 68–88 (ALSLLMVLWLVITAWKHIGYI). Over 89–93 (KEIKP) the chain is Cytoplasmic. Residues 94–114 (LSIISVGFLLLQALIGAAAVI) traverse the membrane as a helical segment. Topologically, residues 115-125 (WQQNDYVLALH) are extracellular. H125 contacts heme o. Residues 126–146 (FGISLISFSSVFLITLIIFSI) form a helical membrane-spanning segment. Over 147 to 163 (DQKYEADELYIKKPLRR) the chain is Cytoplasmic. A helical transmembrane segment spans residues 164-184 (LTWLMAIIIYCGVYTGALVRH). The Extracellular portion of the chain corresponds to 185-215 (ADASLAYGGWPLPFHDLVPHSEQDWVQLTHR). H214 contributes to the heme b binding site. The chain crosses the membrane as a helical span at residues 216–236 (IMAFIVFTIIMITYIHAVKNY). The Cytoplasmic segment spans residues 237–244 (PNNRTVHY). The helical transmembrane segment at 245 to 265 (GYTAAFILVILQVITGALSIM) threads the bilayer. At 266–270 (TNVNL) the chain is on the extracellular side. A helical transmembrane segment spans residues 271–291 (LIALFHALFITYLFGMTTYFI). Residue H276 participates in heme b binding. Residues 292-303 (MLMLRSVRSDKQ) are Cytoplasmic-facing.

This sequence belongs to the COX15/CtaA family. Type 1 subfamily. Interacts with CtaB. The cofactor is heme b.

Its subcellular location is the cell membrane. The enzyme catalyses Fe(II)-heme o + 2 A + H2O = Fe(II)-heme a + 2 AH2. The protein operates within porphyrin-containing compound metabolism; heme A biosynthesis; heme A from heme O: step 1/1. Catalyzes the conversion of heme O to heme A by two successive hydroxylations of the methyl group at C8. The first hydroxylation forms heme I, the second hydroxylation results in an unstable dihydroxymethyl group, which spontaneously dehydrates, resulting in the formyl group of heme A. In Staphylococcus aureus (strain MSSA476), this protein is Heme A synthase.